We begin with the raw amino-acid sequence, 155 residues long: MKLLQIIFIITIYINLHIFVLAENLESVEDSENDVFIPLDKNHPILNQKDNIYSAEFKNYTNGKIIALNKITATSEEIGLKAGEEKYFGNIKIKLHKCIKNLDPYNQDNYLLMTITEYKIDEDPTLLFQGWMVSSSISLSTFEHPIYEIFAKDCF.

This is an uncharacterized protein from Rickettsia prowazekii (strain Madrid E).